The following is a 231-amino-acid chain: Protein PIMREG (231 aa).

Residues 1–44 (MASQWQGMRTSVRRRSLLKEEQLEKKEVTRSAGGHPETGPLGSL) form a disordered region. A phosphoserine mark is found at Ser-11 and Ser-16. 2 short sequence motifs (D-box) span residues 14 to 17 (RRSL) and 53 to 56 (PLRA). A compositionally biased stretch (basic and acidic residues) spans 17–29 (LLKEEQLEKKEVT). Ser-72 carries the phosphoserine modification. Disordered stretches follow at residues 115 to 138 (KVRR…QKNT) and 152 to 197 (HLRL…DLEP). Ser-128 carries the phosphoserine; by Uhmk1; in vitro modification. The segment covering 178–190 (PCSSTEPLCSPSE) has biased composition (polar residues). Phosphoserine occurs at positions 191 and 193.

As to quaternary structure, interacts with PICALM; this interaction may target PICALM to the nucleus. During mitosis, associates with HDAC2 and MTA2 subunits of the chromatin-remodeling NuRD complex; this association is strongest at prometaphase and decreases as the cell progresses through metaphase and anaphase. Post-translationally, ubiquitinated by the anaphase-promoting complex/cyclosome (APC/C) complex in the presence of FZR1, leading to its degradation by the proteasome during mitotic exit. However, degradation is not essential for normal mitotic progression within a single cell cycle. In terms of tissue distribution, mainly expressed in thymus and ovary. Expressed in all T-cell subpopulations isolated from the thymus, macrophages, pro-erythrocytes, granulocytes, mast cells and progenitor cells.

The protein resides in the nucleus. It localises to the nucleolus. In terms of biological role, during mitosis, may play a role in the metaphase-to-anaphase transition. In Mus musculus (Mouse), this protein is Protein PIMREG.